Here is a 401-residue protein sequence, read N- to C-terminus: Enoyl-[acyl-carrier-protein] reductase [NADH] (401 aa).

NAD(+) contacts are provided by residues 48-53 (GSSSGY), 74-75 (FE), 111-112 (DA), and 139-140 (LA). Tyrosine 225 is a binding site for substrate. Tyrosine 235 functions as the Proton donor in the catalytic mechanism. Residues lysine 244 and 273–275 (VVT) contribute to the NAD(+) site.

This sequence belongs to the TER reductase family. Monomer.

It carries out the reaction a 2,3-saturated acyl-[ACP] + NAD(+) = a (2E)-enoyl-[ACP] + NADH + H(+). The protein operates within lipid metabolism; fatty acid biosynthesis. Involved in the final reduction of the elongation cycle of fatty acid synthesis (FAS II). Catalyzes the reduction of a carbon-carbon double bond in an enoyl moiety that is covalently linked to an acyl carrier protein (ACP). The chain is Enoyl-[acyl-carrier-protein] reductase [NADH] from Shewanella putrefaciens (strain CN-32 / ATCC BAA-453).